The chain runs to 231 residues: Platelet-activating factor acetylhydrolase IB subunit alpha1 (231 aa).

At S2 the chain carries N-acetylserine. Position 2 is a phosphoserine (S2). Catalysis depends on residues S47, D192, and H195.

This sequence belongs to the 'GDSL' lipolytic enzyme family. Platelet-activating factor acetylhydrolase IB beta/gamma subunits subfamily. As to quaternary structure, forms a catalytic dimer which is either homodimer (alpha1/alpha1 homodimer) or heterodimer with PAFAH1B2 (alpha1/alpha2 heterodimer). Component of the cytosolic (PAF-AH (I)) heterotetrameric enzyme, which is composed of PAFAH1B1 (beta), PAFAH1B2 (alpha2) and PAFAH1B3 (alpha1) subunits. The catalytic activity of the enzyme resides in the alpha1 (PAFAH1B3) and alpha2 (PAFAH1B2) subunits, whereas the beta subunit (PAFAH1B1) has regulatory activity. Trimer formation is not essential for the catalytic activity. Interacts with VLDLR; this interaction may modulate the Reelin pathway. In the adult, expressed in brain, skeletal muscle, kidney, thymus, spleen, colon, testis, ovary and peripheral blood leukocytes. In the fetus, highest expression occurs in brain.

It localises to the cytoplasm. It catalyses the reaction a 1-O-alkyl-2-acetyl-sn-glycero-3-phosphocholine + H2O = a 1-O-alkyl-sn-glycero-3-phosphocholine + acetate + H(+). The enzyme catalyses 1-O-hexadecyl-2-acetyl-sn-glycero-3-phosphocholine + H2O = 1-O-hexadecyl-sn-glycero-3-phosphocholine + acetate + H(+). It carries out the reaction 1-O-hexadecyl-2-acetyl-sn-glycero-3-phosphate + H2O = 1-O-hexadecyl-sn-glycero-3-phosphate + acetate + H(+). With respect to regulation, beta subunit (PAFAH1B1) inhibits the acetylhydrolase activity of the alpha1/alpha1 catalytic homodimer. Functionally, alpha1 catalytic subunit of the cytosolic type I platelet-activating factor (PAF) acetylhydrolase (PAF-AH (I)) heterotetrameric enzyme that catalyzes the hydrolyze of the acetyl group at the sn-2 position of PAF and its analogs and modulates the action of PAF. The activity and substrate specificity of PAF-AH (I) are affected by its subunit composition. Both alpha1/alpha1 homodimer (PAFAH1B3/PAFAH1B3 homodimer) and alpha1/alpha2 heterodimer(PAFAH1B3/PAFAH1B2 heterodimer) hydrolyze 1-O-alkyl-2-acetyl-sn-glycero-3-phosphoric acid (AAGPA) more efficiently than PAF, but they have little hydrolytic activity towards 1-O-alkyl-2-acetyl-sn-glycero-3-phosphorylethanolamine (AAGPE). Plays an important role during the development of brain. The polypeptide is Platelet-activating factor acetylhydrolase IB subunit alpha1 (Homo sapiens (Human)).